We begin with the raw amino-acid sequence, 550 residues long: Chaperonin GroEL (550 aa).

ATP-binding positions include 29 to 32 (TAGP), lysine 50, 86 to 90 (DGTTT), glycine 417, and aspartate 499.

The protein belongs to the chaperonin (HSP60) family. In terms of assembly, forms a cylinder of 14 subunits composed of two heptameric rings stacked back-to-back. Interacts with the co-chaperonin GroES.

It localises to the cytoplasm. The enzyme catalyses ATP + H2O + a folded polypeptide = ADP + phosphate + an unfolded polypeptide.. In terms of biological role, together with its co-chaperonin GroES, plays an essential role in assisting protein folding. The GroEL-GroES system forms a nano-cage that allows encapsulation of the non-native substrate proteins and provides a physical environment optimized to promote and accelerate protein folding. In Ehrlichia chaffeensis, this protein is Chaperonin GroEL.